The chain runs to 226 residues: Ribonuclease 3 (226 aa).

Positions 6-128 (INRLQRKLGY…LIGGIFLDSD (123 aa)) constitute an RNase III domain. Residue Glu41 coordinates Mg(2+). The active site involves Asp45. Positions 114 and 117 each coordinate Mg(2+). Glu117 is a catalytic residue. Residues 155–225 (DPKTRLQEFL…AEQALKQLEL (71 aa)) form the DRBM domain.

The protein belongs to the ribonuclease III family. In terms of assembly, homodimer. The cofactor is Mg(2+).

It is found in the cytoplasm. The enzyme catalyses Endonucleolytic cleavage to 5'-phosphomonoester.. In terms of biological role, digests double-stranded RNA. Involved in the processing of primary rRNA transcript to yield the immediate precursors to the large and small rRNAs (23S and 16S). Processes some mRNAs, and tRNAs when they are encoded in the rRNA operon. Processes pre-crRNA and tracrRNA of type II CRISPR loci if present in the organism. This Edwardsiella ictaluri (strain 93-146) protein is Ribonuclease 3.